The primary structure comprises 1490 residues: ABC transporter CDR4 (1490 aa).

Residues 1 to 12 (MADADTSSNSSK) are compositionally biased toward polar residues. 2 disordered regions span residues 1 to 26 (MADADTSSNSSKTNEDRSQEGFGTYQ) and 53 to 75 (LKRQHSRQESQKSNEQESELSGK). Topologically, residues 1–516 (MADADTSSNS…NILRIKGNPS (516 aa)) are cytoplasmic. Positions 58–67 (SRQESQKSNE) are enriched in basic and acidic residues. In terms of domain architecture, ABC transporter 1 spans 151-407 (PKYLSLFFRE…FIDMGYECPQ (257 aa)). Transmembrane regions (helical) follow at residues 517–537 (IHLFQIFGNIGMSFILSSIFY), 551–571 (AALFFAVLFNAFSCLLEIFSL), 601–621 (LPTKFIIAIGFNLVYYFMVNF), 626–646 (GNFFFYLLINFSATLAMSHIF), 659–679 (AMTPAAILLLALTIFTGFVIP), and 767–787 (FGIVIGFIVFFFCTYILLCEI). Topologically, residues 788–1182 (NKGAMQKGEI…VFEQNWRTPS (395 aa)) are cytoplasmic. Residues 846-1090 (FFWRDLTYQV…LINYFEKYGA (245 aa)) form the ABC transporter 2 domain. Position 882 to 889 (882 to 889 (GASGAGKT)) interacts with ATP. The next 3 membrane-spanning stretches (helical) occupy residues 1183 to 1203 (YLYSKFLLVVTSSLFNGFSFY), 1217 to 1237 (FSVFMFLVILHTLIQQYLPTF), and 1268 to 1288 (IPWNIICGTLGYFCWYYPVGL). A glycan (N-linked (GlcNAc...) asparagine) is linked at asparagine 1291. The next 3 membrane-spanning stretches (helical) occupy residues 1304–1324 (FMWFAIVLFFIYTSTLAQLCI), 1333–1353 (AANLSVLLFTMCLAFCGVLVT), and 1370–1390 (FTYLVSVMLSVGLVDAPVTCA). A glycan (N-linked (GlcNAc...) asparagine) is linked at asparagine 1424. Residues 1455-1475 (IGIYIAFIGINIIGTFILYWF) traverse the membrane as a helical segment.

This sequence belongs to the ABC transporter superfamily. ABCG family. PDR (TC 3.A.1.205) subfamily.

It is found in the membrane. In Candida albicans (Yeast), this protein is ABC transporter CDR4 (CDR4).